The sequence spans 401 residues: CCA-adding enzyme (401 aa).

ATP contacts are provided by glycine 32 and arginine 35. Residues glycine 32 and arginine 35 each contribute to the CTP site. Aspartate 45 and aspartate 47 together coordinate Mg(2+). Residues arginine 116, aspartate 159, arginine 162, arginine 165, and arginine 168 each contribute to the ATP site. The CTP site is built by arginine 116, aspartate 159, arginine 162, arginine 165, and arginine 168.

This sequence belongs to the tRNA nucleotidyltransferase/poly(A) polymerase family. Bacterial CCA-adding enzyme type 3 subfamily. Homodimer. Requires Mg(2+) as cofactor.

The enzyme catalyses a tRNA precursor + 2 CTP + ATP = a tRNA with a 3' CCA end + 3 diphosphate. It catalyses the reaction a tRNA with a 3' CCA end + 2 CTP + ATP = a tRNA with a 3' CCACCA end + 3 diphosphate. Catalyzes the addition and repair of the essential 3'-terminal CCA sequence in tRNAs without using a nucleic acid template. Adds these three nucleotides in the order of C, C, and A to the tRNA nucleotide-73, using CTP and ATP as substrates and producing inorganic pyrophosphate. tRNA 3'-terminal CCA addition is required both for tRNA processing and repair. Also involved in tRNA surveillance by mediating tandem CCA addition to generate a CCACCA at the 3' terminus of unstable tRNAs. While stable tRNAs receive only 3'-terminal CCA, unstable tRNAs are marked with CCACCA and rapidly degraded. In Streptococcus mutans serotype c (strain ATCC 700610 / UA159), this protein is CCA-adding enzyme.